A 462-amino-acid chain; its full sequence is Juvenile hormone epoxide hydrolase (462 aa).

Residues isoleucine 4 to leucine 24 form a helical membrane-spanning segment. The Nucleophile role is filled by aspartate 227. Tyrosine 372 acts as the Proton donor in catalysis. Histidine 428 functions as the Proton acceptor in the catalytic mechanism.

This sequence belongs to the peptidase S33 family.

It localises to the microsome membrane. It is found in the endoplasmic reticulum membrane. The catalysed reaction is cis-stilbene oxide + H2O = (1R,2R)-hydrobenzoin. It carries out the reaction 1-(4-methoxyphenyl)-N-methyl-N-[(3-methyloxetan-3-yl)methyl]methanamine + H2O = 2-{[(4-methoxybenzyl)(methyl)amino]methyl}-2-methylpropane-1,3-diol. Functionally, catalyzes juvenile hormone hydrolysis. In Manduca sexta (Tobacco hawkmoth), this protein is Juvenile hormone epoxide hydrolase.